We begin with the raw amino-acid sequence, 201 residues long: Recombination protein RecR (201 aa).

A C4-type zinc finger spans residues 57–72 (CKYCANFTNKDECDIC). Positions 80–176 (TKLMIVTTNE…QIYRIGFGIP (97 aa)) constitute a Toprim domain.

Belongs to the RecR family.

Its function is as follows. May play a role in DNA repair. It seems to be involved in an RecBC-independent recombinational process of DNA repair. It may act with RecF and RecO. In Ureaplasma parvum serovar 3 (strain ATCC 27815 / 27 / NCTC 11736), this protein is Recombination protein RecR.